The following is a 269-amino-acid chain: BAG family molecular chaperone regulator 4 (269 aa).

Positions 1-40 (MMHNSTEESEWEVRPGGMLVQRRDDAASSDHKPLQDPDSA) are disordered. Positions 21–35 (QRRDDAASSDHKPLQ) are enriched in basic and acidic residues. The Ubiquitin-like domain occupies 46–122 (QTIRITVSHG…LVVVVEDTNK (77 aa)). In terms of domain architecture, BAG spans 138 to 219 (AIAAVNAVTG…NLQEAVDKLK (82 aa)). The segment at 241-269 (SFGNGVGSLNPPPPASPSANVTQDWEKFD) is disordered.

Binds to the ATPase domain of HSP70/HSC70 chaperones. Interacts with HSP70-1. In terms of tissue distribution, detected in stems, leaves, flowers and roots.

Co-chaperone that regulates diverse cellular pathways, such as programmed cell death and stress responses. This chain is BAG family molecular chaperone regulator 4 (BAG4), found in Arabidopsis thaliana (Mouse-ear cress).